We begin with the raw amino-acid sequence, 562 residues long: 2-succinyl-5-enolpyruvyl-6-hydroxy-3-cyclohexene-1-carboxylate synthase (562 aa).

The protein belongs to the TPP enzyme family. MenD subfamily. Homodimer. It depends on Mg(2+) as a cofactor. Mn(2+) is required as a cofactor. The cofactor is thiamine diphosphate.

The enzyme catalyses isochorismate + 2-oxoglutarate + H(+) = 5-enolpyruvoyl-6-hydroxy-2-succinyl-cyclohex-3-ene-1-carboxylate + CO2. It participates in quinol/quinone metabolism; 1,4-dihydroxy-2-naphthoate biosynthesis; 1,4-dihydroxy-2-naphthoate from chorismate: step 2/7. The protein operates within cofactor biosynthesis; phylloquinone biosynthesis. In terms of biological role, catalyzes the thiamine diphosphate-dependent decarboxylation of 2-oxoglutarate and the subsequent addition of the resulting succinic semialdehyde-thiamine pyrophosphate anion to isochorismate to yield 2-succinyl-5-enolpyruvyl-6-hydroxy-3-cyclohexene-1-carboxylate (SEPHCHC). The sequence is that of 2-succinyl-5-enolpyruvyl-6-hydroxy-3-cyclohexene-1-carboxylate synthase from Thermosynechococcus vestitus (strain NIES-2133 / IAM M-273 / BP-1).